A 198-amino-acid polypeptide reads, in one-letter code: MLAETLILASLSSYRAQLLKKAGLNFFVKGASFDEREVEKTGKTKNPKELSCFLASAKAKNVSERFPEALVIGCDQILDLEGQVFHKVKSIEEAHQRLCILSGKIHSLHSAVALFQNGQEIWVEAFSAHMSVRPLSSEFIERYLARVETDILNSVGVYQIEGEGIHLFEKIEGDFFTIIGLPLLPLLIKLRHFEVIDG.

Asp75 functions as the Proton acceptor in the catalytic mechanism.

This sequence belongs to the Maf family. YceF subfamily. A divalent metal cation serves as cofactor.

It localises to the cytoplasm. It catalyses the reaction N(7)-methyl-GTP + H2O = N(7)-methyl-GMP + diphosphate + H(+). Functionally, nucleoside triphosphate pyrophosphatase that hydrolyzes 7-methyl-GTP (m(7)GTP). May have a dual role in cell division arrest and in preventing the incorporation of modified nucleotides into cellular nucleic acids. This chain is 7-methyl-GTP pyrophosphatase, found in Bartonella henselae (strain ATCC 49882 / DSM 28221 / CCUG 30454 / Houston 1) (Rochalimaea henselae).